The following is a 1115-amino-acid chain: MNAESTMFPHIFLALLALISHIEAFNFMPRPSRVINSPKHLKFHINQTRSSYFGYTLVIRQTSIIVGAPRAQSTLESQRTINETGAIYRCSLTNGVCSPYVLDSRGNVDAPYSEYTFDSERKDFQWLGGSMDGGTKDTDKLLVCAPRFYAPSSRDNHLHGVCYWVNNTVASTPQHVTRISPLRLKSEQVKEEDNGNKASFFYIMGELGLSAHVADDNTKFLIGAPGINTWRGSVILYRQVDPVDNPTASRRDTSKALRRTYRDVDSNDYTPEHYAPEIPTPGLWGQEEDSYFGYAVSSGFFDSSNPTKLLYVATAPQANKQSGEAYIFDVRGKSIHKYHVFRGEQFGEYFGYSVLAEDLNGDGKTDVIVSAPQHALEDSHDNGAIYVFINKGFFNFERQILRSPVETMARFGTALSRLGDINHDGYNDVAVGAPFAGNGTVFIYLGSENGLRDQPSQRLDAPSQQPSKYGSHMFGHGLSRGSDIDGNGFNDFAIGAPNAEAVYLYRAYPVVKVHATVKSESREIKPEQEKVKITACYRLSTTSTDKLVQEQELAIRIAMDKQLKRVKFTQTQTNEISFKVNANFGEQCRDFETQVRYSEKDIFTPIDLEMHYELTKKVPDSEEFCETCAIVDPTEPKVSTQNIIFSTGCATDVCTADLQLRSKDVSPTYILGSADTLRLNYEITNIGETAYLPQFNVTSTSRLAFAQVPGNCKVVDAVMVCDLNRGRPLAKGDTDSVTISFDVSQLSGQSLIIHAEVFSTGYEQNPTDNRQTNVIGLKEFTEIDASGGQTNSQIDLEHYSNSAEIVNNYEIKSNGPSVIEQLTVSFYIPIAYKVAGSTAIIPIINVTSLKMQASYDSQLLSIDLYDQNNTMLVVDPVEVTTTLSGGLERTVITQNRQSYDIHTSGHVHQTMEVLDTSMVATASMSRKRRDLKALTANREQYARISNVKAHDLLSDDFKGKLPVNRTIVFNCRDPEMTICVRAEMRVHFRPEKSINLNMRYSVDLNEVNAILVDPWEYFVILTDLKLQKKGDPTSTSFSINRRIEPNIISKHQETGLPIWIIIVSVIGGLLLLSAISYLLYKFGFFNRTKKDELDRLVQQNPVEPEAENLNSGGNN.

Residues 1–24 (MNAESTMFPHIFLALLALISHIEA) form the signal peptide. At 25-1054 (FNFMPRPSRV…PNIISKHQET (1030 aa)) the chain is on the extracellular side. FG-GAP repeat units lie at residues 39–99 (KHLK…VCSP), 113–174 (SEYT…STPQ), 193–246 (DNGN…VDNP), 278–335 (IPTP…GKSI), 336–397 (HKYH…FNFE), 398–453 (RQIL…GLRD), and 460–522 (DAPS…SESR). Residues asparagine 46, asparagine 82, and asparagine 166 are each glycosylated (N-linked (GlcNAc...) asparagine). Residue asparagine 438 is glycosylated (N-linked (GlcNAc...) asparagine). Asparagine 696, asparagine 845, asparagine 868, and asparagine 964 each carry an N-linked (GlcNAc...) asparagine glycan. The chain crosses the membrane as a helical span at residues 1055 to 1075 (GLPIWIIIVSVIGGLLLLSAI). The Cytoplasmic portion of the chain corresponds to 1076 to 1115 (SYLLYKFGFFNRTKKDELDRLVQQNPVEPEAENLNSGGNN).

It belongs to the integrin alpha chain family. In terms of assembly, heterodimer of an alpha and a beta subunit. The alpha subunit is composed of a heavy and a light chain linked by a disulfide bond. Interacts with mys/beta-PS and Itgbn. In terms of tissue distribution, expressed in embryonic and larval hemocytes (at protein level). Expressed in tissues undergoing invagination, tissue movement and morphogenesis such as salivary gland, trachea, midgut endoderm, dorsal vessel, midline of the ventral nerve cord, amnioserosa and the amnioproctodeal invagination. Expressed in the mushroom body neuropil, brain areas that contain mushroom body processes in synaptic contact with other neurons. In egg chambers, expressed in border cells, in stretch cells and in dorsal appendage primordia.

The protein resides in the apical cell membrane. Its subcellular location is the lateral cell membrane. It localises to the cytoplasm. Integrin alpha-PS3/beta-PS is a receptor for laminin. Also binds to wb. Important during embryogenesis for the development of the trachea, dorsal vessel and salivary gland, as well as for dorsal closure. Required for short-term memory processes. Minor involvement in the establishment of the oocyte anterior-posterior length. Plays a role in timely border cell migration during oogenesis, probably mediated by JNK signaling. Integrin alpha-PS3/Itgbn is required for effective phagocytosis of apoptotic cells during embryonic development and for the phagocytic elimination of S.aureus by mediating the binding of S.aureus peptidoglycan to larval hemocytes, which probably activates a signaling pathway involving Rac1 and Rac2. Integrin alpha-PS3/Itgbn also regulates Fak activity during neuromuscular junction (NMJ) growth and is required for its activation in presynapsis of NMJs. Seems to be dispensable for major morphogenetic processes. The protein is Integrin alpha-PS3 (scb) of Drosophila melanogaster (Fruit fly).